We begin with the raw amino-acid sequence, 189 residues long: dCTP deaminase (189 aa).

DCTP contacts are provided by residues 112–117 (KSTYAR), 136–138 (TLE), Q157, Y171, and Q181. E138 serves as the catalytic Proton donor/acceptor.

This sequence belongs to the dCTP deaminase family. In terms of assembly, homotrimer.

It carries out the reaction dCTP + H2O + H(+) = dUTP + NH4(+). It participates in pyrimidine metabolism; dUMP biosynthesis; dUMP from dCTP (dUTP route): step 1/2. Catalyzes the deamination of dCTP to dUTP. The chain is dCTP deaminase from Paraburkholderia phymatum (strain DSM 17167 / CIP 108236 / LMG 21445 / STM815) (Burkholderia phymatum).